The chain runs to 706 residues: Semenogelin-2 (706 aa).

An N-terminal signal peptide occupies residues 1–23 (MKSIILFVLSLLLILEKQAAVMG). Disordered stretches follow at residues 25–62 (KGGSKGQLSSGSSRFPHRHRSQHYSGQKDKQHTESKGS), 131–156 (KGGQVHHGTQNPSQDQGNSPSGKGIF), and 276–678 (NLNQ…SGAH). A compositionally biased stretch (basic and acidic residues) spans 50–59 (GQKDKQHTES). Polar residues predominate over residues 137-151 (HGTQNPSQDQGNSPS). The segment covering 297–308 (TEERQPNHEENS) has biased composition (basic and acidic residues). Over residues 329–339 (KSQNQVTIPSQ) the composition is skewed to polar residues. Residues 340–349 (DQEHGHKENK) show a composition bias toward basic and acidic residues. The span at 389–399 (KSQNQVTIPSQ) shows a compositional bias: polar residues. Positions 400-409 (DQEHGHKENK) are enriched in basic and acidic residues. Residues 449–459 (KSQNQVTIPSQ) show a composition bias toward polar residues. Residues 460–469 (DQEHGHKENK) are compositionally biased toward basic and acidic residues. Polar residues predominate over residues 509 to 519 (KSQNQVAIPSQ). Residues 520-529 (DQEHGHKENK) are compositionally biased toward basic and acidic residues. The segment covering 569–579 (KSQNQVTIPSQ) has biased composition (polar residues). A compositionally biased stretch (basic and acidic residues) spans 580 to 589 (DQEHGHKENK). Composition is skewed to polar residues over residues 611–622 (KDVSQSSLSFQT) and 630–653 (SQIQTPNPNQGQWSGQNAKGNSGK). The segment covering 654–670 (SADREQDLLSHEQEGRY) has biased composition (basic and acidic residues).

The protein belongs to the semenogelin family. In terms of assembly, interacts with SERPINA5.

The protein resides in the secreted. Participates in the formation of a gel matrix (sperm coagulum) entrapping the accessory gland secretions and ejaculated spermatozoa. The protein is Semenogelin-2 (SEMG2) of Macaca mulatta (Rhesus macaque).